We begin with the raw amino-acid sequence, 1011 residues long: Translation initiation factor IF-2 (1011 aa).

Basic and acidic residues predominate over residues 49 to 77; it reads YIHEHGTEESPRRRSAGEDEFKPKIDLSK. Disordered regions lie at residues 49-152 and 187-407; these read YIHE…RFIT and AAPA…LSLS. Positions 93 to 104 are enriched in pro residues; the sequence is APPPPPPPPPRP. Residues 105 to 115 show a composition bias toward low complexity; that stretch reads AVKAPSPVSQE. A compositionally biased stretch (pro residues) spans 116–126; that stretch reads PRPPAVPPAPQ. 2 stretches are compositionally biased toward low complexity: residues 187-212 and 228-242; these read AAPAEEPKAAAPATTAPEAPEVKAPV and TAKPEAPAAPGAATP. Composition is skewed to pro residues over residues 243-252 and 276-290; these read APTPGRPLPG and SAPPPAPPRPTPPPQ. The segment covering 316-329 has biased composition (gly residues); the sequence is GPGGGSGGPGGFQR. Over residues 361–380 the composition is skewed to low complexity; it reads LAPPGAPANKPAGRPAPARR. The tr-type G domain occupies 502 to 678; sequence VRPPVVTIMG…CLVADLGDLK (177 aa). The segment at 511–518 is G1; that stretch reads GHVDHGKT. 511-518 contacts GTP; that stretch reads GHVDHGKT. Residues 536 to 540 are G2; that stretch reads GITQH. Residues 564–567 form a G3 region; that stretch reads DTPG. GTP contacts are provided by residues 564–568 and 618–621; these read DTPGH and NKID. Residues 618-621 are G4; sequence NKID. The tract at residues 654–656 is G5; the sequence is SAK.

It belongs to the TRAFAC class translation factor GTPase superfamily. Classic translation factor GTPase family. IF-2 subfamily.

The protein resides in the cytoplasm. In terms of biological role, one of the essential components for the initiation of protein synthesis. Protects formylmethionyl-tRNA from spontaneous hydrolysis and promotes its binding to the 30S ribosomal subunits. Also involved in the hydrolysis of GTP during the formation of the 70S ribosomal complex. The chain is Translation initiation factor IF-2 from Koribacter versatilis (strain Ellin345).